The primary structure comprises 545 residues: Chaperonin GroEL (545 aa).

Residues 30–33, Lys-51, 87–91, Gly-415, and Asp-496 each bind ATP; these read TLGP and DGTTT.

The protein belongs to the chaperonin (HSP60) family. As to quaternary structure, forms a cylinder of 14 subunits composed of two heptameric rings stacked back-to-back. Interacts with the co-chaperonin GroES.

It is found in the cytoplasm. The catalysed reaction is ATP + H2O + a folded polypeptide = ADP + phosphate + an unfolded polypeptide.. Together with its co-chaperonin GroES, plays an essential role in assisting protein folding. The GroEL-GroES system forms a nano-cage that allows encapsulation of the non-native substrate proteins and provides a physical environment optimized to promote and accelerate protein folding. The polypeptide is Chaperonin GroEL (Haemophilus influenzae (strain 86-028NP)).